The sequence spans 129 residues: Dormancy-associated protein 2 (129 aa).

A signal peptide spans 1-25; sequence MDSRKAMLILGLLAMVLLISSEVSA. The disordered stretch occupies residues 110–129; sequence GGYHGGGGHGGHGGASNNGN.

It belongs to the DRM1/ARP family. Expressed in axilary buds. Detected in growing stems, leaflets and floral organs, but not in roots.

The sequence is that of Dormancy-associated protein 2 from Pisum sativum (Garden pea).